The chain runs to 317 residues: Transcription initiation factor IIB 3 (317 aa).

Over residues 1-14 the composition is skewed to basic and acidic residues; it reads MERATREREKEQRE. Residues 1–25 form a disordered region; sequence MERATREREKEQREQAQTNDEAQQC. The segment at 21 to 50 adopts a TFIIB-type zinc-finger fold; it reads EAQQCPECNSANVITDQSERVCEDCGLVLE. The Zn(2+) site is built by C25, C28, C42, and C45. A disordered region spans residues 62–83; sequence AFNSSERDQKSRVGAPTTKTMH. 2 consecutive repeat copies span residues 136–219 and 230–311.

It belongs to the TFIIB family.

Its function is as follows. Stabilizes TBP binding to an archaeal box-A promoter. Also responsible for recruiting RNA polymerase II to the pre-initiation complex (DNA-TBP-TFIIB). In Halobacterium salinarum (strain ATCC 700922 / JCM 11081 / NRC-1) (Halobacterium halobium), this protein is Transcription initiation factor IIB 3.